The primary structure comprises 1208 residues: MRLFSLLPLLALLVVQAAGQSEVTSDDPATDAGSTTNSTTDTKPRIPSQDEILGQMPSINPIRTGNPQMDAFYMMFPALGSLLKWGSLFPAYSILGAIPDNLQPTAAASKVVLVLADDATAKTRVARQNPPPNPLGQLMNWPALPQDFQLPSMDLGPQVGSFLAQLPAMPTVPGLLGAAAPVPAPAPAPAAAPPPAPAPAADPPAAPVPDAPQPAILGQAALQNAFTFFNPANFDASSLLGQSVPTFAPPNLDFVAQMQRQFFPGMTPAQPAAAGTDAQASDISEVRVRPEDPYSQEAQMKIKSALEMEQERQQQAQVKDQEQVPLLWFRMPTTQNQDATEEKTLEDLRVEAKLRAFERQVIAELRMLQKIELMAKQMRSSAAAQNGDSPYRISYPLSRTPIHKITRADIEQALRDDYVRRLVNKEAQRRARNSGINTQKANALKRQAKSQDQTLSKEDIVQIMAYAYRMANEQMESEKGKQDKVYAAYRTEQNPMMMQQRQWSEEQAKIQQNQQQIQQNPMMMQQRQWSEEQAKIQQNQQQIQQNPMMMQQRQWSEEQAKIQQNQQQIQQNPMMMQQRQWSEEQAKIQQNQQQIQQNPMMVQQRQWSEEQAKIQQNQQQIQQNPMMMQQRQWSEEQAKIQHDQQMAQQMAQQGLMMTEQRQRQWSEDQAKIQQAQQMAQQTPMMMPQMQQRQWTEDPQMVQQMQQRQWAEDQTRMQMAQQNPMMQQQRQMAENPQMMQQRQWSEEQTKIEQAQQMAQQNQMMMQQMQQRQWSEDQAQIQQQQRQMMQQTPMMMKERQWAEENPQSVQQQGPMMMQQQMPSMMQREVEDEDNKAEDDLVGEAGPQMPENEGTARHKVDALGVGGNKRKKSKSKSAPPTVINYYYAAPQRPVVQSYGTSYGGGGYGSNAYGVPRPVNSYQSQGYRAAVGNDEVDEMLRQHQTMARTINPKQPGEVGGSESQKSNSNPPTTLTPAPQEQPQEHRVHKSPSSAPSETEIENAPSSDPQVGSIFTYGEGLLHPFMGLLPVERPDDPWNQKPYDPHHPLYTGGGSYDAYLRDGRHRRDTHIMGQGTQHGILTPGMLERLLRIKMDFQRRFPHLYKGMLNHHTNLTRVEVQPPVLGKISKPKTKTKPKNEDEPVFELGAAERSLFEDETNDSLEKDPEPEPDEEDDRDVEEPSESSEPRGFSSKKSRDENDIDYFNFDDDDVDD.

Residues 1-19 (MRLFSLLPLLALLVVQAAG) form the signal peptide. Disordered stretches follow at residues 23-60 (VTSD…PSIN), 184-212 (APAP…PDAP), and 268-294 (PAQP…EDPY). Over residues 32-41 (AGSTTNSTTD) the composition is skewed to polar residues. Residues 268–280 (PAQPAAAGTDAQA) show a composition bias toward low complexity. A run of 5 repeats spans residues 493 to 518 (QNPM…QQIQ), 519 to 544 (QNPM…QQIQ), 545 to 570 (QNPM…QQIQ), 571 to 596 (QNPM…QQIQ), and 597 to 622 (QNPM…QQIQ). The interval 493–788 (QNPMMMQQRQ…IQQQQRQMMQ (296 aa)) is 12 X 26 AA approximate tandem repeats, Glu, Met-rich. One copy of the 6; approximate repeat lies at 623–652 (QNPMMMQQRQWSEEQAKIQHDQQMAQQMAQ). One copy of the 7; approximate repeat lies at 653-680 (QGLMMTEQRQRQWSEDQAKIQQAQQMAQ). One copy of the 8; approximate repeat lies at 681–696 (QTPMMMPQMQQRQWTE). Residues 697 to 720 (DPQMVQQMQQRQWAEDQTRMQMAQ) form a 9; approximate repeat. A 10; approximate repeat occupies 721–733 (QNPMMQQQRQMAE). The stretch at 734–758 (NPQMMQQRQWSEEQTKIEQAQQMAQ) is one 11; approximate repeat. Residues 759–788 (QNQMMMQQMQQRQWSEDQAQIQQQQRQMMQ) form a 12; approximate repeat. Over residues 828–839 (EDEDNKAEDDLV) the composition is skewed to acidic residues. 3 disordered regions span residues 828–875 (EDED…SKSA), 944–1010 (RTIN…GSIF), and 1114–1208 (VQPP…DVDD). The segment covering 957-977 (SESQKSNSNPPTTLTPAPQEQ) has biased composition (polar residues). Composition is skewed to acidic residues over residues 1163–1178 (PEPD…EPSE) and 1194–1208 (NDID…DVDD).

It localises to the secreted. In terms of biological role, required for proper assembly of the eggshell. This is Defective chorion protein, FC125 isoform from Drosophila melanogaster (Fruit fly).